The primary structure comprises 84 residues: Small ribosomal subunit protein uS17 (84 aa).

The protein belongs to the universal ribosomal protein uS17 family. Part of the 30S ribosomal subunit.

One of the primary rRNA binding proteins, it binds specifically to the 5'-end of 16S ribosomal RNA. This is Small ribosomal subunit protein uS17 from Serratia proteamaculans (strain 568).